The following is a 194-amino-acid chain: Holliday junction branch migration complex subunit RuvA (194 aa).

The interval 1–64 is domain I; it reads MIGRITGLLL…EDVHLLFGFM (64 aa). Positions 65-140 are domain II; sequence TEQERALFRQ…KIDPVAILSE (76 aa). The segment at 140–143 is flexible linker; sequence EAGA. Residues 144–194 are domain III; the sequence is AASNVDKDILSALLALGYNGREVNRALEQLSEGVTVSDGIMQSLKFLSKVK.

The protein belongs to the RuvA family. As to quaternary structure, homotetramer. Forms an RuvA(8)-RuvB(12)-Holliday junction (HJ) complex. HJ DNA is sandwiched between 2 RuvA tetramers; dsDNA enters through RuvA and exits via RuvB. An RuvB hexamer assembles on each DNA strand where it exits the tetramer. Each RuvB hexamer is contacted by two RuvA subunits (via domain III) on 2 adjacent RuvB subunits; this complex drives branch migration. In the full resolvosome a probable DNA-RuvA(4)-RuvB(12)-RuvC(2) complex forms which resolves the HJ.

The protein localises to the cytoplasm. Functionally, the RuvA-RuvB-RuvC complex processes Holliday junction (HJ) DNA during genetic recombination and DNA repair, while the RuvA-RuvB complex plays an important role in the rescue of blocked DNA replication forks via replication fork reversal (RFR). RuvA specifically binds to HJ cruciform DNA, conferring on it an open structure. The RuvB hexamer acts as an ATP-dependent pump, pulling dsDNA into and through the RuvAB complex. HJ branch migration allows RuvC to scan DNA until it finds its consensus sequence, where it cleaves and resolves the cruciform DNA. The protein is Holliday junction branch migration complex subunit RuvA of Nitrosomonas eutropha (strain DSM 101675 / C91 / Nm57).